We begin with the raw amino-acid sequence, 424 residues long: Calreticulin (424 aa).

The signal sequence occupies residues 1-29 (MAIRARSSSYAAAAVALALALASVAAVAG). Residue Asn61 is glycosylated (N-linked (GlcNAc...) asparagine). Cys115 and Cys147 are joined by a disulfide. An alpha-D-glucoside contacts are provided by Tyr119, Lys121, Tyr138, and Asp145. Repeat copies occupy residues 201–212 (KQSGSIYEHWDI), 220–231 (DPEAKKPEDWDD), 237–248 (DPEDKKPEGYDD), 255–266 (DPDAKKPEDWDD), 270–280 (GEWTAPTIPNP), 284–294 (GPWKQKKIKNP), and 298–308 (GKWKAPMIDNP). Residues 201-266 (KQSGSIYEHW…DAKKPEDWDD (66 aa)) form a 4 X approximate repeats region. Residues 217 to 262 (QIKDPEAKKPEDWDDKEYIPDPEDKKPEGYDDIPKEIPDPDAKKPE) are compositionally biased toward basic and acidic residues. The interval 217 to 289 (QIKDPEAKKP…PEYKGPWKQK (73 aa)) is disordered. Residues 270 to 308 (GEWTAPTIPNPEYKGPWKQKKIKNPNYQGKWKAPMIDNP) form a 3 X approximate repeats region. Glu328 contacts an alpha-D-glucoside. Positions 356–385 (ETWGKHKDAEKAAFDEAEKKKEEEEAAKAG) are enriched in basic and acidic residues. The segment at 356–424 (ETWGKHKDAE…DSDDEKHDEL (69 aa)) is disordered. A compositionally biased stretch (acidic residues) spans 386–401 (EDDDDLDDEDAEDEDK). A compositionally biased stretch (basic and acidic residues) spans 402–424 (ADEKADSDAEDGKDSDDEKHDEL). The short motif at 421-424 (HDEL) is the Prevents secretion from ER element.

Belongs to the calreticulin family. Phosphorylated.

Its subcellular location is the endoplasmic reticulum lumen. Functionally, molecular calcium-binding chaperone promoting folding, oligomeric assembly and quality control in the ER via the calreticulin/calnexin cycle. This lectin may interact transiently with almost all of the monoglucosylated glycoproteins that are synthesized in the ER. The sequence is that of Calreticulin from Oryza sativa subsp. japonica (Rice).